The chain runs to 121 residues: Nitrogenase-stabilizing/protective protein NifW (121 aa).

The protein belongs to the NifW family. Homotrimer; associates with NifD.

Functionally, may protect the nitrogenase Fe-Mo protein from oxidative damage. This is Nitrogenase-stabilizing/protective protein NifW from Synechococcus sp. (strain JA-2-3B'a(2-13)) (Cyanobacteria bacterium Yellowstone B-Prime).